A 39-amino-acid polypeptide reads, in one-letter code: Sarcotoxin-1C (39 aa).

Position 39 is an arginine amide (arginine 39).

This sequence belongs to the cecropin family.

It is found in the secreted. In terms of biological role, sarcotoxins, which are potent bactericidal proteins, are produced in response to injury. They are cytotoxic to both Gram-positive and Gram-negative bacteria. The polypeptide is Sarcotoxin-1C (Sarcophaga peregrina (Flesh fly)).